The chain runs to 293 residues: Pyridoxal 5'-phosphate synthase subunit PdxS (293 aa).

Asp23 provides a ligand contact to D-ribose 5-phosphate. Lys80 functions as the Schiff-base intermediate with D-ribose 5-phosphate in the catalytic mechanism. Gly152 serves as a coordination point for D-ribose 5-phosphate. A D-glyceraldehyde 3-phosphate-binding site is contributed by Arg164. D-ribose 5-phosphate is bound by residues Gly213 and 234-235 (GS).

The protein belongs to the PdxS/SNZ family. In terms of assembly, in the presence of PdxT, forms a dodecamer of heterodimers.

It catalyses the reaction aldehydo-D-ribose 5-phosphate + D-glyceraldehyde 3-phosphate + L-glutamine = pyridoxal 5'-phosphate + L-glutamate + phosphate + 3 H2O + H(+). It participates in cofactor biosynthesis; pyridoxal 5'-phosphate biosynthesis. Its function is as follows. Catalyzes the formation of pyridoxal 5'-phosphate from ribose 5-phosphate (RBP), glyceraldehyde 3-phosphate (G3P) and ammonia. The ammonia is provided by the PdxT subunit. Can also use ribulose 5-phosphate and dihydroxyacetone phosphate as substrates, resulting from enzyme-catalyzed isomerization of RBP and G3P, respectively. In Thermus thermophilus (strain ATCC BAA-163 / DSM 7039 / HB27), this protein is Pyridoxal 5'-phosphate synthase subunit PdxS.